The sequence spans 38 residues: NAD-reducing hydrogenase HoxS subunit beta (38 aa).

This sequence belongs to the [NiFe]/[NiFeSe] hydrogenase large subunit family. As to quaternary structure, tetramer of an alpha and a gamma subunits (flavin-containing dimer), and a delta and a nickel-containing beta subunits (hydrogenase dimer). FMN is required as a cofactor. The cofactor is Ni(2+).

It localises to the cytoplasm. It carries out the reaction H2 + NAD(+) = NADH + H(+). This Rhodococcus opacus (Nocardia opaca) protein is NAD-reducing hydrogenase HoxS subunit beta (hoxH).